We begin with the raw amino-acid sequence, 118 residues long: Large ribosomal subunit protein uL22 (118 aa).

It belongs to the universal ribosomal protein uL22 family. Part of the 50S ribosomal subunit.

In terms of biological role, this protein binds specifically to 23S rRNA; its binding is stimulated by other ribosomal proteins, e.g. L4, L17, and L20. It is important during the early stages of 50S assembly. It makes multiple contacts with different domains of the 23S rRNA in the assembled 50S subunit and ribosome. Functionally, the globular domain of the protein is located near the polypeptide exit tunnel on the outside of the subunit, while an extended beta-hairpin is found that lines the wall of the exit tunnel in the center of the 70S ribosome. The chain is Large ribosomal subunit protein uL22 from Chlorobium limicola (strain DSM 245 / NBRC 103803 / 6330).